Reading from the N-terminus, the 216-residue chain is 3-isopropylmalate dehydratase small subunit 1 (216 aa).

It belongs to the LeuD family. LeuD type 1 subfamily. In terms of assembly, heterodimer of LeuC and LeuD.

It carries out the reaction (2R,3S)-3-isopropylmalate = (2S)-2-isopropylmalate. It functions in the pathway amino-acid biosynthesis; L-leucine biosynthesis; L-leucine from 3-methyl-2-oxobutanoate: step 2/4. Its function is as follows. Catalyzes the isomerization between 2-isopropylmalate and 3-isopropylmalate, via the formation of 2-isopropylmaleate. The polypeptide is 3-isopropylmalate dehydratase small subunit 1 (Bordetella bronchiseptica (strain ATCC BAA-588 / NCTC 13252 / RB50) (Alcaligenes bronchisepticus)).